The primary structure comprises 83 residues: UPF0248 protein TGAM_1209 (83 aa).

The protein belongs to the UPF0248 family.

The chain is UPF0248 protein TGAM_1209 from Thermococcus gammatolerans (strain DSM 15229 / JCM 11827 / EJ3).